A 101-amino-acid chain; its full sequence is NADH-quinone oxidoreductase subunit K (101 aa).

3 helical membrane passes run 4–24 (LAHYLVLGAILFAISIVGIFL), 30–50 (IIILMAIELMLLAVNTNFVAF), and 61–81 (IFVFFVLTVAAAEAAIGLAIL).

Belongs to the complex I subunit 4L family. In terms of assembly, NDH-1 is composed of 14 different subunits. Subunits NuoA, H, J, K, L, M, N constitute the membrane sector of the complex.

Its subcellular location is the cell inner membrane. The enzyme catalyses a quinone + NADH + 5 H(+)(in) = a quinol + NAD(+) + 4 H(+)(out). In terms of biological role, NDH-1 shuttles electrons from NADH, via FMN and iron-sulfur (Fe-S) centers, to quinones in the respiratory chain. The immediate electron acceptor for the enzyme in this species is believed to be ubiquinone. Couples the redox reaction to proton translocation (for every two electrons transferred, four hydrogen ions are translocated across the cytoplasmic membrane), and thus conserves the redox energy in a proton gradient. In Paraburkholderia phymatum (strain DSM 17167 / CIP 108236 / LMG 21445 / STM815) (Burkholderia phymatum), this protein is NADH-quinone oxidoreductase subunit K.